The following is a 247-amino-acid chain: Probable membrane transporter protein y4hK (247 aa).

6 helical membrane-spanning segments follow: residues alanine 5 to alanine 25, isoleucine 31 to leucine 51, valine 74 to proline 94, serine 121 to alanine 141, phenylalanine 202 to serine 222, and alanine 227 to tryptophan 247.

The protein belongs to the 4-toluene sulfonate uptake permease (TSUP) (TC 2.A.102) family.

It is found in the cell membrane. In Sinorhizobium fredii (strain NBRC 101917 / NGR234), this protein is Probable membrane transporter protein y4hK.